Here is a 433-residue protein sequence, read N- to C-terminus: Glutamate-1-semialdehyde 2,1-aminomutase (433 aa).

Lys-272 carries the post-translational modification N6-(pyridoxal phosphate)lysine.

It belongs to the class-III pyridoxal-phosphate-dependent aminotransferase family. HemL subfamily. Homodimer. Pyridoxal 5'-phosphate is required as a cofactor.

It is found in the cytoplasm. The enzyme catalyses (S)-4-amino-5-oxopentanoate = 5-aminolevulinate. The protein operates within porphyrin-containing compound metabolism; protoporphyrin-IX biosynthesis; 5-aminolevulinate from L-glutamyl-tRNA(Glu): step 2/2. The sequence is that of Glutamate-1-semialdehyde 2,1-aminomutase from Methylacidiphilum infernorum (isolate V4) (Methylokorus infernorum (strain V4)).